Reading from the N-terminus, the 783-residue chain is Rabenosyn-5 (783 aa).

Ala-2 is subject to N-acetylalanine. The residue at position 3 (Ser-3) is a Phosphoserine. The C2H2-type zinc-finger motif lies at 14 to 37 (FLCPLCLKDLQSFYQLQSHYEEEH). Residues 99 to 262 (RSHLSDFKKH…HCKDKLLKRE (164 aa)) form a necessary for the correct targeting to endosomes region. Residues 156-259 (DQDVPFCPDC…CCTHCKDKLL (104 aa)) form an FYVE-type zinc finger. Positions 162, 165, 178, 181, 186, and 189 each coordinate Zn(2+). A compositionally biased stretch (polar residues) spans 206–223 (KDSLSTHTSPSQSPNSVH). Positions 206-240 (KDSLSTHTSPSQSPNSVHGSRRGSISSMSSVSSVL) are disordered. Phosphoserine occurs at positions 214, 218, 225, and 229. The span at 227 to 239 (RGSISSMSSVSSV) shows a compositional bias: low complexity. Positions 251 and 254 each coordinate Zn(2+). The tract at residues 263-499 (QQMDEKEHTP…QLQDEYDQQQ (237 aa)) is necessary for interaction with RAB4A. Residues 263 to 783 (QQMDEKEHTP…TLAKQKGAPN (521 aa)) are necessary for interaction with EHD1. Coiled coils occupy residues 377–412 (TKEQFEELKKKRKQDLEQKRTVERQAALESRRKLEE) and 471–531 (QAKA…ELER). Basic and acidic residues-rich tracts occupy residues 387-399 (KRKQDLEQKRTVE) and 405-414 (ESRRKLEERQ). A disordered region spans residues 387-433 (KRKQDLEQKRTVERQAALESRRKLEERQSGLASHTANGDVRSLRGIP). The 20-residue stretch at 495 to 514 (YDQQQTEKAIELSRKQAEEE) folds into the UIM domain. Disordered stretches follow at residues 569 to 638 (SYSL…SPTE) and 663 to 733 (FEED…EEHI). Polar residues-rich tracts occupy residues 571–584 (SLDQDSSPVQSSTA) and 610–623 (TLPQSTMSQQSDKA). The segment at 627-783 (PFDEDDLSSP…TLAKQKGAPN (157 aa)) is necessary for interaction with RAB5A. Positions 663 to 673 (FEEDAEEEEVA) are enriched in acidic residues. A Phosphoserine modification is found at Ser-686. Residues 721–733 (VDSDSGMEAEEHI) show a composition bias toward acidic residues.

Interacts with EHD1, RAB4A, RAB5A, RAB22A, RAB24 and VPS45. Binds simultaneously to RAB4A and RAB5A in vitro. Interacts with RAB4A and RAB5A that has been activated by GTP binding.

It localises to the cell membrane. The protein localises to the early endosome membrane. In terms of biological role, rab4/Rab5 effector protein acting in early endocytic membrane fusion and membrane trafficking of recycling endosomes. Required for endosome fusion either homotypically or with clathrin coated vesicles. Plays a role in the lysosomal trafficking of CTSD/cathepsin D from the Golgi to lysosomes. Also promotes the recycling of transferrin directly from early endosomes to the plasma membrane. Binds phospholipid vesicles containing phosphatidylinositol 3-phosphate (PtdInsP3). Plays a role in the recycling of transferrin receptor to the plasma membrane. The chain is Rabenosyn-5 from Mus musculus (Mouse).